The sequence spans 275 residues: Trans-aconitate 2-methyltransferase (275 aa).

It belongs to the methyltransferase superfamily. Tam family.

It localises to the cytoplasm. It catalyses the reaction trans-aconitate + S-adenosyl-L-methionine = (E)-3-(methoxycarbonyl)pent-2-enedioate + S-adenosyl-L-homocysteine. Catalyzes the S-adenosylmethionine monomethyl esterification of trans-aconitate. In Pseudomonas aeruginosa (strain ATCC 15692 / DSM 22644 / CIP 104116 / JCM 14847 / LMG 12228 / 1C / PRS 101 / PAO1), this protein is Trans-aconitate 2-methyltransferase.